Consider the following 343-residue polypeptide: MIESDRLISAKAGEYEEVHDRAIRPTLLSEYVGQPTVREQMEIFISAARGRQEALDHVLIFGPPGLGKTTLANIIANEMGVSIKTTSGPVLEKAGDLAAMLTNLEEGDVLFIDEIHRLSAAVEEVLYPAMEDYQLDIMIGEGPAARSIKLDLPPFTLVGATTRAGLLTSPLRDRFGIVQRLEFYNHQDLTHIITRSARLSSVEIDEAGAFEIARRSRGTPRIANRLLRRVRDFAEVRSNGHITADIADQALNMLKVDSQGFDHMDRRLLLAMIEKFDGGPVGVESLAAAISEERGTIEDVLEPFLIQQGYMVRTPRGRMVTSNAYQHFGVVPPRSGREDDLFE.

Positions 4 to 184 (SDRLISAKAG…FGIVQRLEFY (181 aa)) are large ATPase domain (RuvB-L). Residues Ile23, Arg24, Gly65, Lys68, Thr69, Thr70, 131–133 (EDY), Arg174, Tyr184, and Arg221 contribute to the ATP site. Mg(2+) is bound at residue Thr69. The tract at residues 185 to 255 (NHQDLTHIIT…IADQALNMLK (71 aa)) is small ATPAse domain (RuvB-S). The head domain (RuvB-H) stretch occupies residues 258–343 (SQGFDHMDRR…RSGREDDLFE (86 aa)). Residues Arg294, Arg313, and Arg318 each coordinate DNA.

Belongs to the RuvB family. Homohexamer. Forms an RuvA(8)-RuvB(12)-Holliday junction (HJ) complex. HJ DNA is sandwiched between 2 RuvA tetramers; dsDNA enters through RuvA and exits via RuvB. An RuvB hexamer assembles on each DNA strand where it exits the tetramer. Each RuvB hexamer is contacted by two RuvA subunits (via domain III) on 2 adjacent RuvB subunits; this complex drives branch migration. In the full resolvosome a probable DNA-RuvA(4)-RuvB(12)-RuvC(2) complex forms which resolves the HJ.

It is found in the cytoplasm. The catalysed reaction is ATP + H2O = ADP + phosphate + H(+). Its function is as follows. The RuvA-RuvB-RuvC complex processes Holliday junction (HJ) DNA during genetic recombination and DNA repair, while the RuvA-RuvB complex plays an important role in the rescue of blocked DNA replication forks via replication fork reversal (RFR). RuvA specifically binds to HJ cruciform DNA, conferring on it an open structure. The RuvB hexamer acts as an ATP-dependent pump, pulling dsDNA into and through the RuvAB complex. RuvB forms 2 homohexamers on either side of HJ DNA bound by 1 or 2 RuvA tetramers; 4 subunits per hexamer contact DNA at a time. Coordinated motions by a converter formed by DNA-disengaged RuvB subunits stimulates ATP hydrolysis and nucleotide exchange. Immobilization of the converter enables RuvB to convert the ATP-contained energy into a lever motion, pulling 2 nucleotides of DNA out of the RuvA tetramer per ATP hydrolyzed, thus driving DNA branch migration. The RuvB motors rotate together with the DNA substrate, which together with the progressing nucleotide cycle form the mechanistic basis for DNA recombination by continuous HJ branch migration. Branch migration allows RuvC to scan DNA until it finds its consensus sequence, where it cleaves and resolves cruciform DNA. In Marinobacter nauticus (strain ATCC 700491 / DSM 11845 / VT8) (Marinobacter aquaeolei), this protein is Holliday junction branch migration complex subunit RuvB.